The following is a 445-amino-acid chain: MAAQVASGVGNLNLNSEGGAAAKNRPAQGSPENEARESDGEYDDDQGAPELGNTTAAKKKKKKTKKKKKCTSKVQTEPPRIILSSLFPNNQYPEGEIVEYQNENAYRTTNEEKRHLDRMNNDFLAEYRYAAEVHRQVRQYSQKAIKPGQTLTEIAEGIEESVRALTGHPGLEEGDNLRGGIAFPTGVNLNHCAAHYTPNAGNKMVLQYEDVMKVDFGVHINGRIVDSAFTIAFDPVYDNLLAAVKDATNTGIKQAGIDVRMSDIGAAIQEAMESYEVEIKGTSYPVKAIRNLNGHTIGRYEIHGGKNGKSVPIVKGGDQTKMEEGEVYAIETFGSTGRGYVRDDMETSHYAKIPDAPNVPLRLSSAKNLLNVITKNFGTLPFCRRYLDRLGQDKYLLGLNNLVANGIVDAYPPLCDVKGSYTAQFEHTILLRPNVKEIISRGDDY.

Residues 1–76 (MAAQVASGVG…KKKCTSKVQT (76 aa)) form a disordered region. Residues 57–71 (AKKKKKKTKKKKKCT) are compositionally biased toward basic residues. His195 contributes to the substrate binding site. Asp215, Asp226, and His295 together coordinate a divalent metal cation. Position 303 (His303) interacts with substrate. Residues Glu331 and Glu426 each coordinate a divalent metal cation.

Belongs to the peptidase M24A family. Methionine aminopeptidase eukaryotic type 2 subfamily. Co(2+) is required as a cofactor. Zn(2+) serves as cofactor. It depends on Mn(2+) as a cofactor. Requires Fe(2+) as cofactor.

It is found in the cytoplasm. The enzyme catalyses Release of N-terminal amino acids, preferentially methionine, from peptides and arylamides.. In terms of biological role, cotranslationally removes the N-terminal methionine from nascent proteins. The N-terminal methionine is often cleaved when the second residue in the primary sequence is small and uncharged (Met-Ala-, Cys, Gly, Pro, Ser, Thr, or Val). In Paracoccidioides lutzii (strain ATCC MYA-826 / Pb01) (Paracoccidioides brasiliensis), this protein is Methionine aminopeptidase 2.